The chain runs to 286 residues: Bifunctional protein FolD (286 aa).

NADP(+) is bound by residues 166–168 (GAS) and Ile-232.

This sequence belongs to the tetrahydrofolate dehydrogenase/cyclohydrolase family. As to quaternary structure, homodimer.

The enzyme catalyses (6R)-5,10-methylene-5,6,7,8-tetrahydrofolate + NADP(+) = (6R)-5,10-methenyltetrahydrofolate + NADPH. It carries out the reaction (6R)-5,10-methenyltetrahydrofolate + H2O = (6R)-10-formyltetrahydrofolate + H(+). Its pathway is one-carbon metabolism; tetrahydrofolate interconversion. In terms of biological role, catalyzes the oxidation of 5,10-methylenetetrahydrofolate to 5,10-methenyltetrahydrofolate and then the hydrolysis of 5,10-methenyltetrahydrofolate to 10-formyltetrahydrofolate. The polypeptide is Bifunctional protein FolD (Shewanella woodyi (strain ATCC 51908 / MS32)).